Reading from the N-terminus, the 929-residue chain is ATP-dependent RNA helicase DDX42 (929 aa).

At Lys-5 the chain carries N6-acetyllysine. Arg-12 is subject to Omega-N-methylarginine. Disordered regions lie at residues 25–119 (KKEE…LEAF) and 182–203 (EYDS…LPPI). The segment covering 35 to 52 (SHSAFGAASSSSGFGKSA) has biased composition (low complexity). Ser-58 bears the Phosphoserine mark. Over residues 70-84 (DEENAYFEDEEEDSS) the composition is skewed to acidic residues. Phosphoserine is present on residues Ser-96, Ser-104, Ser-109, and Ser-111. A coiled-coil region spans residues 116–157 (LEAFMAEVEDQAARDMKRLEEKDKERKNVKGIRDDIEEEDDQ). Position 185 is a phosphoserine (Ser-185). A Q motif motif is present at residues 253–281 (SSFAHFGFDEQLMHQIRKSEYTQPTPIQC). Positions 284-459 (VPVALSGRDM…RDILIDPIRV (176 aa)) constitute a Helicase ATP-binding domain. Position 297–304 (297–304 (AKTGSGKT)) interacts with ATP. Positions 407-410 (DEAD) match the DEAD box motif. The Helicase C-terminal domain occupies 487-632 (WLTRRLVEFT…HVSKELLDLA (146 aa)). Disordered regions lie at residues 662–682 (ERPG…VMSN) and 723–929 (GTSS…RWDS). Positions 723–737 (GTSSAGASGWTSAGS) are enriched in low complexity. Polar residues-rich tracts occupy residues 738-777 (LNSV…SSAP) and 787-798 (GVNNTASGNNSR). A necessary for interaction with TP53BP2 region spans residues 739–828 (NSVPTNSAQQ…RHSHGDGGNR (90 aa)). Positions 821-911 (SHGDGGNRHG…KVDSKTDKTP (91 aa)) are enriched in basic and acidic residues. A Glycyl lysine isopeptide (Lys-Gly) (interchain with G-Cter in SUMO2) cross-link involves residue Lys-894.

Belongs to the DEAD box helicase family. DDX42 subfamily. Transient component of the SF3B subcomplex of the 17S U2 SnRNP complex. Interacts (via the C-terminus) with TP53BP2; the interaction is not inhibitied by TP53BP2 ubiquitination and is independent of p53/TP53.

It is found in the cytoplasm. The protein resides in the nucleus. It catalyses the reaction ATP + H2O = ADP + phosphate + H(+). In terms of biological role, ATP-dependent RNA helicase that binds to partially double-stranded RNAs (dsRNAs) in order to unwind RNA secondary structures. Unwinding is promoted in the presence of single-strand binding proteins. Also mediates RNA duplex formation thereby displacing the single-strand RNA binding protein. ATP and ADP modulate its activity: ATP binding and hydrolysis by DDX42 triggers RNA strand separation, whereas the ADP-bound form of the protein triggers annealing of complementary RNA strands. Required for assembly of the 17S U2 SnRNP complex of the spliceosome, a large ribonucleoprotein complex that removes introns from transcribed pre-mRNAs: DDX42 associates transiently with the SF3B subcomplex of the 17S U2 SnRNP complex and is released after fulfilling its role in the assembly of 17S U2 SnRNP. Involved in the survival of cells by interacting with TP53BP2 and thereby counteracting the apoptosis-stimulating activity of TP53BP2. Relocalizes TP53BP2 to the cytoplasm. This is ATP-dependent RNA helicase DDX42 (Ddx42) from Mus musculus (Mouse).